Here is a 426-residue protein sequence, read N- to C-terminus: Enolase (426 aa).

Gln-163 is a (2R)-2-phosphoglycerate binding site. The active-site Proton donor is the Glu-205. Residues Asp-242, Glu-283, and Asp-310 each contribute to the Mg(2+) site. Lys-335, Arg-364, Ser-365, and Lys-386 together coordinate (2R)-2-phosphoglycerate. The Proton acceptor role is filled by Lys-335.

The protein belongs to the enolase family. Mg(2+) is required as a cofactor.

It is found in the cytoplasm. The protein resides in the secreted. The protein localises to the cell surface. The enzyme catalyses (2R)-2-phosphoglycerate = phosphoenolpyruvate + H2O. The protein operates within carbohydrate degradation; glycolysis; pyruvate from D-glyceraldehyde 3-phosphate: step 4/5. Functionally, catalyzes the reversible conversion of 2-phosphoglycerate (2-PG) into phosphoenolpyruvate (PEP). It is essential for the degradation of carbohydrates via glycolysis. The polypeptide is Enolase (Arthrobacter sp. (strain FB24)).